The following is a 538-amino-acid chain: Chaperonin GroEL 1 (538 aa).

ATP is bound by residues 29 to 32 (TLGP), 86 to 90 (DGTTT), Gly413, and Asp494.

This sequence belongs to the chaperonin (HSP60) family. In terms of assembly, forms a cylinder of 14 subunits composed of two heptameric rings stacked back-to-back. Interacts with the co-chaperonin GroES.

The protein localises to the cytoplasm. The catalysed reaction is ATP + H2O + a folded polypeptide = ADP + phosphate + an unfolded polypeptide.. Functionally, together with its co-chaperonin GroES, plays an essential role in assisting protein folding. The GroEL-GroES system forms a nano-cage that allows encapsulation of the non-native substrate proteins and provides a physical environment optimized to promote and accelerate protein folding. The protein is Chaperonin GroEL 1 of Mycobacterium avium (strain 104).